A 350-amino-acid chain; its full sequence is Heme A synthase (350 aa).

8 helical membrane-spanning segments follow: residues 16–36 (LARWLFVVAFMVVAIVAVGGI), 77–97 (FQLVNGPAGMTLATYKFIFFW), 101–121 (HRLLARTIGLVFAAPLAWFWI), 136–156 (LLALGALQGAVGWWMVKSGIV), 170–190 (LLVALFTLGGLVWTALDLVAL), 201–221 (GIGLLALAMLVLQLFYGALVA), 265–285 (VFLVHFIHRWWAWAVVAVLVV), and 299–321 (IVLHSVFGTQVLLGIFTVWSGVA). His-272 serves as a coordination point for heme. His-328 serves as a coordination point for heme.

This sequence belongs to the COX15/CtaA family. Type 2 subfamily. As to quaternary structure, interacts with CtaB. Requires heme b as cofactor.

It localises to the cell membrane. The catalysed reaction is Fe(II)-heme o + 2 A + H2O = Fe(II)-heme a + 2 AH2. It functions in the pathway porphyrin-containing compound metabolism; heme A biosynthesis; heme A from heme O: step 1/1. Its function is as follows. Catalyzes the conversion of heme O to heme A by two successive hydroxylations of the methyl group at C8. The first hydroxylation forms heme I, the second hydroxylation results in an unstable dihydroxymethyl group, which spontaneously dehydrates, resulting in the formyl group of heme A. In Novosphingobium aromaticivorans (strain ATCC 700278 / DSM 12444 / CCUG 56034 / CIP 105152 / NBRC 16084 / F199), this protein is Heme A synthase.